Consider the following 383-residue polypeptide: UDP-N-acetylenolpyruvoylglucosamine reductase (383 aa).

Over residues 1–13 (MRTRRDVPADRSG) the composition is skewed to basic and acidic residues. Residues 1 to 26 (MRTRRDVPADRSGRSRVSRHPGLSVP) form a disordered region. Residues 49–215 (LGGPATRLLT…LRVRFELENA (167 aa)) form the FAD-binding PCMH-type domain. Residue Arg192 is part of the active site. Ser271 (proton donor) is an active-site residue. Residue Glu375 is part of the active site.

It belongs to the MurB family. Requires FAD as cofactor.

It localises to the cytoplasm. The enzyme catalyses UDP-N-acetyl-alpha-D-muramate + NADP(+) = UDP-N-acetyl-3-O-(1-carboxyvinyl)-alpha-D-glucosamine + NADPH + H(+). It participates in cell wall biogenesis; peptidoglycan biosynthesis. In terms of biological role, cell wall formation. This is UDP-N-acetylenolpyruvoylglucosamine reductase from Streptomyces coelicolor (strain ATCC BAA-471 / A3(2) / M145).